Here is a 308-residue protein sequence, read N- to C-terminus: Aspartate carbamoyltransferase catalytic subunit (308 aa).

Carbamoyl phosphate contacts are provided by Arg-49 and Thr-50. Residue Lys-77 participates in L-aspartate binding. Carbamoyl phosphate is bound by residues Arg-99, His-127, and Gln-130. Residues Arg-160 and Arg-211 each coordinate L-aspartate. Carbamoyl phosphate is bound by residues Ala-252 and Pro-253.

This sequence belongs to the aspartate/ornithine carbamoyltransferase superfamily. ATCase family. As to quaternary structure, heterododecamer (2C3:3R2) of six catalytic PyrB chains organized as two trimers (C3), and six regulatory PyrI chains organized as three dimers (R2).

The catalysed reaction is carbamoyl phosphate + L-aspartate = N-carbamoyl-L-aspartate + phosphate + H(+). It functions in the pathway pyrimidine metabolism; UMP biosynthesis via de novo pathway; (S)-dihydroorotate from bicarbonate: step 2/3. In terms of biological role, catalyzes the condensation of carbamoyl phosphate and aspartate to form carbamoyl aspartate and inorganic phosphate, the committed step in the de novo pyrimidine nucleotide biosynthesis pathway. This chain is Aspartate carbamoyltransferase catalytic subunit, found in Geobacillus thermodenitrificans (strain NG80-2).